The sequence spans 357 residues: MSATALRIAPIASRTFQRRLGYLLAGVATGAAATVAYKAQKNNNYYKYNNNNNNNSGFKAGALAAAAGVVHLAHEEDKKTADYQKVYNLIAERLRDDDEYDNYIGYGPVLVRLAWHSSGTWDKNDNTGGSYGGTYRYKKESQDPSNAGLENAAKFLEPVKKQFPWISYGDLYTLGGVVGIQELQGPKIPWRSGRTDLPEDMTPDNGRLPDGDKDANYVRNFYKRLDFNDREVVALLGAHALGKTHLKNSGFEGPWGAANNIFTNEFYLNLLNEDWKLEKNDAGNLQYNSPKGYMMLPTDYALIQDSNYLKIVKEYAADQDAFFRDFSKAFAALLERGIDFPKNQPVHIFKTLDEQGL.

Residues Met-1–Leu-23 constitute a mitochondrion transit peptide. His-116 functions as the Proton acceptor in the catalytic mechanism. Residues Pro-189–Asp-212 are disordered. His-239 contacts heme b. Trp-255 functions as the Tryptophan radical intermediate in the catalytic mechanism.

It belongs to the peroxidase family. Cytochrome c peroxidase subfamily. As to quaternary structure, forms a one-to-one complex with cytochrome c. The cofactor is heme b.

Its subcellular location is the mitochondrion matrix. The protein localises to the mitochondrion intermembrane space. It carries out the reaction 2 Fe(II)-[cytochrome c] + H2O2 + 2 H(+) = 2 Fe(III)-[cytochrome c] + 2 H2O. In terms of biological role, destroys radicals which are normally produced within the cells and which are toxic to biological systems. In Candida glabrata (strain ATCC 2001 / BCRC 20586 / JCM 3761 / NBRC 0622 / NRRL Y-65 / CBS 138) (Yeast), this protein is Cytochrome c peroxidase, mitochondrial.